Consider the following 66-residue polypeptide: DNA gyrase inhibitor YacG (66 aa).

Zn(2+) is bound by residues Cys9, Cys12, Cys28, and Cys32. The segment at 45–66 (HKIAGSQESEDELYSGDLEPRH) is disordered.

The protein belongs to the DNA gyrase inhibitor YacG family. Interacts with GyrB. Zn(2+) serves as cofactor.

Its function is as follows. Inhibits all the catalytic activities of DNA gyrase by preventing its interaction with DNA. Acts by binding directly to the C-terminal domain of GyrB, which probably disrupts DNA binding by the gyrase. This Pseudomonas putida (strain W619) protein is DNA gyrase inhibitor YacG.